A 437-amino-acid polypeptide reads, in one-letter code: Ribosomal protein uS12 methylthiotransferase RimO (437 aa).

In terms of domain architecture, MTTase N-terminal spans 3–118 (KKFYITTLGC…AGKILREKFP (116 aa)). [4Fe-4S] cluster-binding residues include Cys-12, Cys-48, Cys-81, Cys-157, Cys-161, and Cys-164. Residues 143-370 (NYSKPYAYVK…RDSHLEILEE (228 aa)) enclose the Radical SAM core domain. The TRAM domain maps to 373-437 (ESRIGRTYDA…YEYDMNGTWV (65 aa)).

This sequence belongs to the methylthiotransferase family. RimO subfamily. [4Fe-4S] cluster is required as a cofactor.

It localises to the cytoplasm. It catalyses the reaction L-aspartate(89)-[ribosomal protein uS12]-hydrogen + (sulfur carrier)-SH + AH2 + 2 S-adenosyl-L-methionine = 3-methylsulfanyl-L-aspartate(89)-[ribosomal protein uS12]-hydrogen + (sulfur carrier)-H + 5'-deoxyadenosine + L-methionine + A + S-adenosyl-L-homocysteine + 2 H(+). In terms of biological role, catalyzes the methylthiolation of an aspartic acid residue of ribosomal protein uS12. In Leptospira interrogans serogroup Icterohaemorrhagiae serovar Lai (strain 56601), this protein is Ribosomal protein uS12 methylthiotransferase RimO.